We begin with the raw amino-acid sequence, 255 residues long: Pyridoxine 5'-phosphate synthase (255 aa).

N12 is a 3-amino-2-oxopropyl phosphate binding site. 14–15 serves as a coordination point for 1-deoxy-D-xylulose 5-phosphate; sequence DH. Residue R23 participates in 3-amino-2-oxopropyl phosphate binding. Residue H48 is the Proton acceptor of the active site. 1-deoxy-D-xylulose 5-phosphate contacts are provided by R50 and H55. E75 functions as the Proton acceptor in the catalytic mechanism. T105 lines the 1-deoxy-D-xylulose 5-phosphate pocket. The Proton donor role is filled by H199. Residues G200 and 221–222 contribute to the 3-amino-2-oxopropyl phosphate site; that span reads GF.

Belongs to the PNP synthase family. As to quaternary structure, homooctamer; tetramer of dimers.

The protein resides in the cytoplasm. It catalyses the reaction 3-amino-2-oxopropyl phosphate + 1-deoxy-D-xylulose 5-phosphate = pyridoxine 5'-phosphate + phosphate + 2 H2O + H(+). The protein operates within cofactor biosynthesis; pyridoxine 5'-phosphate biosynthesis; pyridoxine 5'-phosphate from D-erythrose 4-phosphate: step 5/5. Functionally, catalyzes the complicated ring closure reaction between the two acyclic compounds 1-deoxy-D-xylulose-5-phosphate (DXP) and 3-amino-2-oxopropyl phosphate (1-amino-acetone-3-phosphate or AAP) to form pyridoxine 5'-phosphate (PNP) and inorganic phosphate. This chain is Pyridoxine 5'-phosphate synthase, found in Rhodopseudomonas palustris (strain BisB18).